We begin with the raw amino-acid sequence, 699 residues long: Elongation factor G (699 aa).

Residues 10–292 enclose the tr-type G domain; sequence NRTRNIGIMA…AVIDYLPSPT (283 aa). GTP is bound by residues 19 to 26, 90 to 94, and 144 to 147; these read AHIDAGKT, DTPGH, and NKMD. The disordered stretch occupies residues 292 to 312; sequence TDVPAIRGEEDDGSEGSRSAS.

This sequence belongs to the TRAFAC class translation factor GTPase superfamily. Classic translation factor GTPase family. EF-G/EF-2 subfamily.

The protein localises to the cytoplasm. In terms of biological role, catalyzes the GTP-dependent ribosomal translocation step during translation elongation. During this step, the ribosome changes from the pre-translocational (PRE) to the post-translocational (POST) state as the newly formed A-site-bound peptidyl-tRNA and P-site-bound deacylated tRNA move to the P and E sites, respectively. Catalyzes the coordinated movement of the two tRNA molecules, the mRNA and conformational changes in the ribosome. In Coxiella burnetii (strain CbuG_Q212) (Coxiella burnetii (strain Q212)), this protein is Elongation factor G.